We begin with the raw amino-acid sequence, 1143 residues long: DNA-directed RNA polymerase subunit beta (1143 aa).

This sequence belongs to the RNA polymerase beta chain family. In terms of assembly, in plastids the minimal PEP RNA polymerase catalytic core is composed of four subunits: alpha, beta, beta', and beta''. When a (nuclear-encoded) sigma factor is associated with the core the holoenzyme is formed, which can initiate transcription.

The protein localises to the plastid. Its subcellular location is the chloroplast. It catalyses the reaction RNA(n) + a ribonucleoside 5'-triphosphate = RNA(n+1) + diphosphate. DNA-dependent RNA polymerase catalyzes the transcription of DNA into RNA using the four ribonucleoside triphosphates as substrates. This Pyropia yezoensis (Susabi-nori) protein is DNA-directed RNA polymerase subunit beta.